The primary structure comprises 862 residues: Taxadiene synthase (862 aa).

The Mg(2+) site is built by Asp-613, Asp-617, Asn-757, Thr-761, and Glu-765. A DDXXD motif motif is present at residues 613–617 (DDMAD).

Belongs to the terpene synthase family. It depends on Mg(2+) as a cofactor.

The catalysed reaction is (2E,6E,10E)-geranylgeranyl diphosphate = taxa-4(5),11(12)-diene + diphosphate. It functions in the pathway alkaloid biosynthesis; taxol biosynthesis; taxa-4(20),11-dien-5alpha-ol from geranylgeranyl diphosphate: step 1/2. Its function is as follows. Catalyzes the cyclization of the ubiquitous isoprenoid intermediate geranylgeranyl diphosphate to taxa-4,11-diene, the parent olefin with a taxane skeleton. The polypeptide is Taxadiene synthase (TDC1) (Taxus brevifolia (Pacific yew)).